The following is a 273-amino-acid chain: Putative phosphoenolpyruvate synthase regulatory protein (273 aa).

153 to 160 (AVSRAGKT) contributes to the ADP binding site.

Belongs to the pyruvate, phosphate/water dikinase regulatory protein family. PSRP subfamily.

The enzyme catalyses [pyruvate, water dikinase] + ADP = [pyruvate, water dikinase]-phosphate + AMP + H(+). It carries out the reaction [pyruvate, water dikinase]-phosphate + phosphate + H(+) = [pyruvate, water dikinase] + diphosphate. Bifunctional serine/threonine kinase and phosphorylase involved in the regulation of the phosphoenolpyruvate synthase (PEPS) by catalyzing its phosphorylation/dephosphorylation. The sequence is that of Putative phosphoenolpyruvate synthase regulatory protein from Xanthomonas campestris pv. campestris (strain 8004).